Consider the following 88-residue polypeptide: MGDVAAKIKVMPNSPDIDLDDLQDRLEESLPQGAKIRGFQRDDVAFGLVALLPTVIVPDGAGGTEAVEEAFNEVDGVESVAVENVGRL.

It belongs to the EF-1-beta/EF-1-delta family.

Promotes the exchange of GDP for GTP in EF-1-alpha/GDP, thus allowing the regeneration of EF-1-alpha/GTP that could then be used to form the ternary complex EF-1-alpha/GTP/AAtRNA. The chain is Elongation factor 1-beta from Halorubrum lacusprofundi (strain ATCC 49239 / DSM 5036 / JCM 8891 / ACAM 34).